A 458-amino-acid polypeptide reads, in one-letter code: Monomethylamine methyltransferase MtmB3 (458 aa).

Residue pyrrolysine 202 is a non-standard amino acid, pyrrolysine.

It belongs to the monomethylamine methyltransferase family.

The catalysed reaction is Co(I)-[methylamine-specific corrinoid protein] + methylamine + H(+) = methyl-Co(III)-[methylamine-specific corrinoid protein] + NH4(+). It functions in the pathway one-carbon metabolism; methanogenesis from methylamine. Functionally, catalyzes the transfer of the methyl group from monomethylamine to the corrinoid cofactor of MtmC. The polypeptide is Monomethylamine methyltransferase MtmB3 (mtmB3) (Methanosarcina barkeri (strain Fusaro / DSM 804)).